We begin with the raw amino-acid sequence, 418 residues long: Pyruvate decarboxylase 1 (418 aa).

Histidine 59 is a binding site for substrate. The thiamine pyrophosphate binding stretch occupies residues 337 to 418; the sequence is DSWFNCQKLK…IFLINNGGYT (82 aa). Residues aspartate 387, asparagine 414, and glycine 416 each coordinate Mg(2+).

The protein belongs to the TPP enzyme family. As to quaternary structure, homotetramer. A metal cation serves as cofactor. It depends on thiamine diphosphate as a cofactor. As to expression, leaves.

The catalysed reaction is a 2-oxocarboxylate + H(+) = an aldehyde + CO2. This Nicotiana tabacum (Common tobacco) protein is Pyruvate decarboxylase 1 (PDC1).